A 604-amino-acid polypeptide reads, in one-letter code: Phosphomethylpyrimidine synthase (604 aa).

Substrate-binding positions include asparagine 218, methionine 247, tyrosine 276, histidine 312, 332 to 334, 373 to 376, and glutamate 412; these read SRG and DGLR. Histidine 416 lines the Zn(2+) pocket. Tyrosine 439 lines the substrate pocket. Position 480 (histidine 480) interacts with Zn(2+). [4Fe-4S] cluster contacts are provided by cysteine 560, cysteine 563, and cysteine 568.

It belongs to the ThiC family. In terms of assembly, homodimer. It depends on [4Fe-4S] cluster as a cofactor.

The enzyme catalyses 5-amino-1-(5-phospho-beta-D-ribosyl)imidazole + S-adenosyl-L-methionine = 4-amino-2-methyl-5-(phosphooxymethyl)pyrimidine + CO + 5'-deoxyadenosine + formate + L-methionine + 3 H(+). It participates in cofactor biosynthesis; thiamine diphosphate biosynthesis. Functionally, catalyzes the synthesis of the hydroxymethylpyrimidine phosphate (HMP-P) moiety of thiamine from aminoimidazole ribotide (AIR) in a radical S-adenosyl-L-methionine (SAM)-dependent reaction. This chain is Phosphomethylpyrimidine synthase, found in Zymomonas mobilis subsp. mobilis (strain ATCC 31821 / ZM4 / CP4).